A 485-amino-acid polypeptide reads, in one-letter code: Protein hunchback (485 aa).

Residues 1-77 (TSSTARKTPE…EEDDDIRTPK (77 aa)) are disordered. Residues 16 to 37 (QDQNQLLKTPIQTNGNQQSTFD) show a composition bias toward polar residues. Residues 59 to 72 (ADVDDENDAEEDDD) show a composition bias toward acidic residues. 4 C2H2-type zinc fingers span residues 87–109 (YKCKQCDFIAVTKLSFWEHNRIH), 116–138 (LKCQKCPFITEYKHHLEYHLRNH), 144–166 (FQCKQCNYSCVNKSMLNSHMKSH), and 172–196 (YRCKDCNYATKYCHSLKLHLRKYSH). Disordered stretches follow at residues 229-270 (KDEG…PPSS), 318-361 (NGWQ…QVKH), and 398-422 (PKPVQLQLPTSSTTTPLKTTSEDDS). Residues 257–270 (NFEQSQHVPTPPSS) are compositionally biased toward polar residues. A compositionally biased stretch (acidic residues) spans 325 to 335 (NCNEEETPEKE). The segment covering 345–358 (DLSSNPSTPSTVSQ) has biased composition (polar residues). Residues 402–416 (QLQLPTSSTTTPLKT) show a composition bias toward low complexity. 2 consecutive C2H2-type zinc fingers follow at residues 432–454 (YECKFCDISFKHAVLYTIHMGYH) and 460–484 (FKCNACGKKCEDRVAFFLHIARDAH).

Belongs to the hunchback C2H2-type zinc-finger protein family.

The protein localises to the nucleus. In terms of biological role, gap class segmentation protein that controls development of head structures. In Clogmia albipunctata (Mothmidge), this protein is Protein hunchback (hb).